The chain runs to 232 residues: Ubiquinone biosynthesis O-methyltransferase (232 aa).

S-adenosyl-L-methionine contacts are provided by Arg-36, Gly-55, Asp-76, and Met-120.

Belongs to the methyltransferase superfamily. UbiG/COQ3 family.

It catalyses the reaction a 3-demethylubiquinol + S-adenosyl-L-methionine = a ubiquinol + S-adenosyl-L-homocysteine + H(+). It carries out the reaction a 3-(all-trans-polyprenyl)benzene-1,2-diol + S-adenosyl-L-methionine = a 2-methoxy-6-(all-trans-polyprenyl)phenol + S-adenosyl-L-homocysteine + H(+). It participates in cofactor biosynthesis; ubiquinone biosynthesis. In terms of biological role, O-methyltransferase that catalyzes the 2 O-methylation steps in the ubiquinone biosynthetic pathway. This chain is Ubiquinone biosynthesis O-methyltransferase, found in Burkholderia cenocepacia (strain ATCC BAA-245 / DSM 16553 / LMG 16656 / NCTC 13227 / J2315 / CF5610) (Burkholderia cepacia (strain J2315)).